Here is a 541-residue protein sequence, read N- to C-terminus: Chaperonin GroEL (541 aa).

ATP-binding positions include 29-32 (TLGP), 86-90 (DGTTT), Gly413, 478-480 (DAL), and Asp494.

Belongs to the chaperonin (HSP60) family. In terms of assembly, forms a cylinder of 14 subunits composed of two heptameric rings stacked back-to-back. Interacts with the co-chaperonin GroES.

It localises to the cytoplasm. The catalysed reaction is ATP + H2O + a folded polypeptide = ADP + phosphate + an unfolded polypeptide.. Its function is as follows. Together with its co-chaperonin GroES, plays an essential role in assisting protein folding. The GroEL-GroES system forms a nano-cage that allows encapsulation of the non-native substrate proteins and provides a physical environment optimized to promote and accelerate protein folding. In Alkaliphilus oremlandii (strain OhILAs) (Clostridium oremlandii (strain OhILAs)), this protein is Chaperonin GroEL.